A 230-amino-acid chain; its full sequence is 2-C-methyl-D-erythritol 4-phosphate cytidylyltransferase (230 aa).

The protein belongs to the IspD/TarI cytidylyltransferase family. IspD subfamily.

It catalyses the reaction 2-C-methyl-D-erythritol 4-phosphate + CTP + H(+) = 4-CDP-2-C-methyl-D-erythritol + diphosphate. The protein operates within isoprenoid biosynthesis; isopentenyl diphosphate biosynthesis via DXP pathway; isopentenyl diphosphate from 1-deoxy-D-xylulose 5-phosphate: step 2/6. Functionally, catalyzes the formation of 4-diphosphocytidyl-2-C-methyl-D-erythritol from CTP and 2-C-methyl-D-erythritol 4-phosphate (MEP). This Synechocystis sp. (strain ATCC 27184 / PCC 6803 / Kazusa) protein is 2-C-methyl-D-erythritol 4-phosphate cytidylyltransferase.